The primary structure comprises 392 residues: Nicotinate phosphoribosyltransferase (392 aa).

His-216 bears the Phosphohistidine; by autocatalysis mark.

This sequence belongs to the NAPRTase family. In terms of processing, transiently phosphorylated on a His residue during the reaction cycle. Phosphorylation strongly increases the affinity for substrates and increases the rate of nicotinate D-ribonucleotide production. Dephosphorylation regenerates the low-affinity form of the enzyme, leading to product release.

It catalyses the reaction nicotinate + 5-phospho-alpha-D-ribose 1-diphosphate + ATP + H2O = nicotinate beta-D-ribonucleotide + ADP + phosphate + diphosphate. Its pathway is cofactor biosynthesis; NAD(+) biosynthesis; nicotinate D-ribonucleotide from nicotinate: step 1/1. In terms of biological role, catalyzes the synthesis of beta-nicotinate D-ribonucleotide from nicotinate and 5-phospho-D-ribose 1-phosphate at the expense of ATP. This chain is Nicotinate phosphoribosyltransferase, found in Cupriavidus necator (strain ATCC 17699 / DSM 428 / KCTC 22496 / NCIMB 10442 / H16 / Stanier 337) (Ralstonia eutropha).